A 187-amino-acid chain; its full sequence is UPF0340 protein SGO_0411 (187 aa).

The protein belongs to the UPF0340 family.

This chain is UPF0340 protein SGO_0411, found in Streptococcus gordonii (strain Challis / ATCC 35105 / BCRC 15272 / CH1 / DL1 / V288).